Consider the following 331-residue polypeptide: Anthranilate phosphoribosyltransferase (331 aa).

5-phospho-alpha-D-ribose 1-diphosphate-binding positions include G79, 82–83 (GD), S87, 89–92 (NIST), 107–115 (KHCNSSISG), and S119. Position 79 (G79) interacts with anthranilate. S91 is a Mg(2+) binding site. N110 is an anthranilate binding site. Residue R165 coordinates anthranilate. Mg(2+) is bound by residues D223 and E224.

The protein belongs to the anthranilate phosphoribosyltransferase family. As to quaternary structure, homodimer. Requires Mg(2+) as cofactor.

It carries out the reaction N-(5-phospho-beta-D-ribosyl)anthranilate + diphosphate = 5-phospho-alpha-D-ribose 1-diphosphate + anthranilate. It participates in amino-acid biosynthesis; L-tryptophan biosynthesis; L-tryptophan from chorismate: step 2/5. In terms of biological role, catalyzes the transfer of the phosphoribosyl group of 5-phosphorylribose-1-pyrophosphate (PRPP) to anthranilate to yield N-(5'-phosphoribosyl)-anthranilate (PRA). The sequence is that of Anthranilate phosphoribosyltransferase from Buchnera aphidicola subsp. Melaphis rhois.